We begin with the raw amino-acid sequence, 378 residues long: D-alanine--D-alanine ligase (378 aa).

Residues 157-368 form the ATP-grasp domain; the sequence is KVVFESAGLS…YGDLIDELIH (212 aa). 189–244 provides a ligand contact to ATP; it reads VDKLGFPVFVKPARAGSSMGISKVDSMEGLDAAIDEARRHDLKLVIEAGIVGREIE. Aspartate 322, glutamate 335, and asparagine 337 together coordinate Mg(2+).

It belongs to the D-alanine--D-alanine ligase family. Requires Mg(2+) as cofactor. It depends on Mn(2+) as a cofactor.

It localises to the cytoplasm. The enzyme catalyses 2 D-alanine + ATP = D-alanyl-D-alanine + ADP + phosphate + H(+). Its pathway is cell wall biogenesis; peptidoglycan biosynthesis. Functionally, cell wall formation. The polypeptide is D-alanine--D-alanine ligase (Paenarthrobacter aurescens (strain TC1)).